The primary structure comprises 541 residues: MTKTVTRAGGASGPQQFQSGGETMKYEITRRRFLAASSAVLAAPAIVTMVRPARAGTTLTLGHGAAPGNPRTVAAAKFAELVAEKTAGRVTINVAGAETLGSDAAMLTSLRTGALDVTANSQGATSALVPELAALGLPFLFENTAKAMQVLGGPVGAELVKRFEAVGVVPLDWWDNGIRHLTNSKRKVAAPAEVSGMKIRTPADPMTMDIFQALGAATEQIAFGELYVALQQGVVDGQENPLANIDSSKLYEVNKYISLTGHKWESTPFLMSQIAQARLGGDLEAVKAAAKEAGELQRKLSADKDAEVLAAFRRISAIEVTEVDREGFAKATASVVESRRSPSGISSPRSNRQPKAEALSAREHPMKSLSNLVELTARAIVWFARQVVIFSGIALMVFMTANVAARYVLAGGGFSFAQELPVLIFPWFILGGIVLAAHSGGHMAVEWIYDKLRDGARSTAFVAANLVSAGAFLMLGYQAYLVGEIAGIEHSPVLQLPNSVGYFALAVGSVLVAIVTLAVALRVLRLGWDHRTNTESGEVAL.

The tat-type signal signal peptide spans 1–55 (MTKTVTRAGGASGPQQFQSGGETMKYEITRRRFLAASSAVLAAPAIVTMVRPARA). The tract at residues 339 to 362 (RRSPSGISSPRSNRQPKAEALSAR) is disordered. Residues 341–351 (SPSGISSPRSN) are compositionally biased toward low complexity. A run of 4 helical transmembrane segments spans residues 379–399 (AIVW…MVFM), 420–440 (LPVL…AHSG), 466–486 (LVSA…GEIA), and 500–520 (VGYF…LAVA).

It belongs to the bacterial solute-binding protein 7 family. Predicted to be exported by the Tat system. The position of the signal peptide cleavage has not been experimentally proven.

The protein resides in the cell membrane. This is an uncharacterized protein from Sinorhizobium fredii (strain NBRC 101917 / NGR234).